The following is a 132-amino-acid chain: Small ribosomal subunit protein uS11c (132 aa).

Belongs to the universal ribosomal protein uS11 family. In terms of assembly, part of the 30S ribosomal subunit.

It localises to the plastid. It is found in the chloroplast. This chain is Small ribosomal subunit protein uS11c, found in Gnetum parvifolium (Small-leaved jointfir).